The following is a 59-amino-acid chain: Single-pass membrane and coiled-coil domain-containing protein 4 (59 aa).

Residues 1-23 form a disordered region; that stretch reads MRQLKGKPKKETSKDKKERKQAM. Basic and acidic residues predominate over residues 9-22; that stretch reads KKETSKDKKERKQA. Residues 9–31 adopt a coiled-coil conformation; it reads KKETSKDKKERKQAMQEARQQIT. A helical transmembrane segment spans residues 32 to 52; the sequence is TVVLPTLAVVVALIVVFVYVA.

It belongs to the SMCO4 family.

The protein resides in the membrane. This chain is Single-pass membrane and coiled-coil domain-containing protein 4 (smco4), found in Xenopus laevis (African clawed frog).